The sequence spans 376 residues: Queuine tRNA-ribosyltransferase (376 aa).

The active-site Proton acceptor is the aspartate 89. Substrate is bound by residues 89-93 (DSGGF), aspartate 143, glutamine 194, and glycine 221. Residues 252–258 (GVGLPSN) form an RNA binding region. Aspartate 271 serves as the catalytic Nucleophile. An RNA binding; important for wobble base 34 recognition region spans residues 276-280 (ARNGR). Zn(2+)-binding residues include cysteine 309, cysteine 311, cysteine 314, and histidine 340.

This sequence belongs to the queuine tRNA-ribosyltransferase family. Homodimer. Within each dimer, one monomer is responsible for RNA recognition and catalysis, while the other monomer binds to the replacement base PreQ1. The cofactor is Zn(2+).

The catalysed reaction is 7-aminomethyl-7-carbaguanine + guanosine(34) in tRNA = 7-aminomethyl-7-carbaguanosine(34) in tRNA + guanine. Its pathway is tRNA modification; tRNA-queuosine biosynthesis. In terms of biological role, catalyzes the base-exchange of a guanine (G) residue with the queuine precursor 7-aminomethyl-7-deazaguanine (PreQ1) at position 34 (anticodon wobble position) in tRNAs with GU(N) anticodons (tRNA-Asp, -Asn, -His and -Tyr). Catalysis occurs through a double-displacement mechanism. The nucleophile active site attacks the C1' of nucleotide 34 to detach the guanine base from the RNA, forming a covalent enzyme-RNA intermediate. The proton acceptor active site deprotonates the incoming PreQ1, allowing a nucleophilic attack on the C1' of the ribose to form the product. After dissociation, two additional enzymatic reactions on the tRNA convert PreQ1 to queuine (Q), resulting in the hypermodified nucleoside queuosine (7-(((4,5-cis-dihydroxy-2-cyclopenten-1-yl)amino)methyl)-7-deazaguanosine). This chain is Queuine tRNA-ribosyltransferase, found in Clostridium tetani (strain Massachusetts / E88).